Consider the following 286-residue polypeptide: MAHISATLVKELRERTGAGMMECKKALVDTQGDVELAIDNMRKSGQAKAAKKSGRVASEGVILLEISSEQKLGAILELNCETDFVAKDASFKSFAEEIISTALKEKITSSELLKAKFEEQRTALVAKIGENINIRRIAMLESEALGSYLHGARIGVLVSAVGADQKCLKNLAMHIAASKPEYVNSEDVPSEVVNREHQVQLDIAMQSGKPRDIAEKMVSGRMKKFTGEISLTGQNFVMEPTKTVGDWLEEHGATVLNFIRFEVGEGIEKSTTNFADEVAAISKKEV.

Residues Thr-82 to Val-85 form an involved in Mg(2+) ion dislocation from EF-Tu region.

This sequence belongs to the EF-Ts family.

It localises to the cytoplasm. Associates with the EF-Tu.GDP complex and induces the exchange of GDP to GTP. It remains bound to the aminoacyl-tRNA.EF-Tu.GTP complex up to the GTP hydrolysis stage on the ribosome. The polypeptide is Elongation factor Ts (Hamiltonella defensa subsp. Acyrthosiphon pisum (strain 5AT)).